Here is a 478-residue protein sequence, read N- to C-terminus: Centromere DNA-binding protein complex CBF3 subunit C (478 aa).

The disordered stretch occupies residues 206 to 251 (EVGEEKDVDVSGANSDENSSPSSTIKNKKRSASKRSHSDNGNVGAT). Residues 217–230 (GANSDENSSPSSTI) show a composition bias toward polar residues. Over residues 231–240 (KNKKRSASKR) the composition is skewed to basic residues.

Component of the CBF3 copmplex, which is formed of CBF3A/CBF2, CBF3B/CEP3, CBF3C/CTF13 and CBF3D. CBF3C interacts with CBF3D and SGT1.

It is found in the nucleus. It localises to the chromosome. The protein resides in the centromere. Functionally, acts as a central component of the centromere DNA-binding protein complex CBF3, which is essential for chromosome segregation and movement of centromeres along microtubules. CBF3 is required for the recruitment of other kinetochore complexes to CEN DNA. It plays a role in the attachment of chromosomes to the spindle and binds selectively to a highly conserved DNA sequence called CDEIII, found in centromers and in several promoters. The association of CBF3C with CBF3D and SGT1 is required for CBF3C activation and CBF3 assembly. This chain is Centromere DNA-binding protein complex CBF3 subunit C (CTF13), found in Saccharomyces cerevisiae (strain ATCC 204508 / S288c) (Baker's yeast).